Here is a 419-residue protein sequence, read N- to C-terminus: Pyrophosphate--fructose 6-phosphate 1-phosphotransferase (419 aa).

Residue G12 participates in diphosphate binding. D107 contributes to the Mg(2+) binding site. Substrate is bound by residues 132–134, 178–180, E238, and 300–303; these read TID, MGR, and YELR. Residue D134 is the Proton acceptor of the active site.

It belongs to the phosphofructokinase type A (PFKA) family. PPi-dependent PFK group II subfamily. Clade 'Short' sub-subfamily. In terms of assembly, homodimer. Mg(2+) is required as a cofactor. The cofactor is Co(2+). It depends on Mn(2+) as a cofactor. Ni(2+) serves as cofactor.

The protein localises to the cytoplasm. The enzyme catalyses beta-D-fructose 6-phosphate + diphosphate = beta-D-fructose 1,6-bisphosphate + phosphate + H(+). The protein operates within carbohydrate degradation; glycolysis; D-glyceraldehyde 3-phosphate and glycerone phosphate from D-glucose: step 3/4. Non-allosteric. Catalyzes the phosphorylation of D-fructose 6-phosphate, the first committing step of glycolysis. Uses inorganic phosphate (PPi) as phosphoryl donor instead of ATP like common ATP-dependent phosphofructokinases (ATP-PFKs), which renders the reaction reversible, and can thus function both in glycolysis and gluconeogenesis. Consistently, PPi-PFK can replace the enzymes of both the forward (ATP-PFK) and reverse (fructose-bisphosphatase (FBPase)) reactions. This is Pyrophosphate--fructose 6-phosphate 1-phosphotransferase from Thermotoga maritima (strain ATCC 43589 / DSM 3109 / JCM 10099 / NBRC 100826 / MSB8).